The primary structure comprises 199 residues: Probable molybdenum cofactor guanylyltransferase (199 aa).

GTP is bound by residues 9–11 (LAG), K21, D69, and D100. Residue D100 coordinates Mg(2+).

It belongs to the MobA family. The cofactor is Mg(2+).

It is found in the cytoplasm. It catalyses the reaction Mo-molybdopterin + GTP + H(+) = Mo-molybdopterin guanine dinucleotide + diphosphate. In terms of biological role, transfers a GMP moiety from GTP to Mo-molybdopterin (Mo-MPT) cofactor (Moco or molybdenum cofactor) to form Mo-molybdopterin guanine dinucleotide (Mo-MGD) cofactor. This Bacillus cytotoxicus (strain DSM 22905 / CIP 110041 / 391-98 / NVH 391-98) protein is Probable molybdenum cofactor guanylyltransferase.